Consider the following 779-residue polypeptide: Ribosome-releasing factor 2, mitochondrial (779 aa).

A tr-type G domain is found at Ala68–Glu353. GTP is bound by residues Ala77 to Thr84, Asp141 to His145, and Asn195 to Asp198.

This sequence belongs to the TRAFAC class translation factor GTPase superfamily. Classic translation factor GTPase family. EF-G/EF-2 subfamily.

The protein localises to the mitochondrion. The catalysed reaction is GTP + H2O = GDP + phosphate + H(+). Functionally, mitochondrial GTPase that mediates the disassembly of ribosomes from messenger RNA at the termination of mitochondrial protein biosynthesis. Acts in collaboration with MRRF. GTP hydrolysis follows the ribosome disassembly and probably occurs on the ribosome large subunit. Not involved in the GTP-dependent ribosomal translocation step during translation elongation. This chain is Ribosome-releasing factor 2, mitochondrial (Gfm2), found in Mus musculus (Mouse).